Reading from the N-terminus, the 163-residue chain is MVILGIDPGYGRIGYGVLEKKGNMFNLIDYGVIYTSKEDELPKRLLNIDEQLRNLIETYKPDESAVEKLYFFKNVATAIQVGEARGVILLCLEKENIPIYEYTPFQIKQAVTGYGRAEKGQIQRTLKLLLKLEKTPTPDDAADALATAFCHGNFRRSFKNAGY.

Catalysis depends on residues Asp-7, Glu-67, and Asp-140. The Mg(2+) site is built by Asp-7, Glu-67, and Asp-140.

This sequence belongs to the RuvC family. Homodimer which binds Holliday junction (HJ) DNA. The HJ becomes 2-fold symmetrical on binding to RuvC with unstacked arms; it has a different conformation from HJ DNA in complex with RuvA. In the full resolvosome a probable DNA-RuvA(4)-RuvB(12)-RuvC(2) complex forms which resolves the HJ. It depends on Mg(2+) as a cofactor.

Its subcellular location is the cytoplasm. It catalyses the reaction Endonucleolytic cleavage at a junction such as a reciprocal single-stranded crossover between two homologous DNA duplexes (Holliday junction).. Its function is as follows. The RuvA-RuvB-RuvC complex processes Holliday junction (HJ) DNA during genetic recombination and DNA repair. Endonuclease that resolves HJ intermediates. Cleaves cruciform DNA by making single-stranded nicks across the HJ at symmetrical positions within the homologous arms, yielding a 5'-phosphate and a 3'-hydroxyl group; requires a central core of homology in the junction. The consensus cleavage sequence is 5'-(A/T)TT(C/G)-3'. Cleavage occurs on the 3'-side of the TT dinucleotide at the point of strand exchange. HJ branch migration catalyzed by RuvA-RuvB allows RuvC to scan DNA until it finds its consensus sequence, where it cleaves and resolves the cruciform DNA. The protein is Crossover junction endodeoxyribonuclease RuvC of Petrotoga mobilis (strain DSM 10674 / SJ95).